The sequence spans 459 residues: Cysteine--tRNA ligase (459 aa).

Zn(2+) is bound at residue Cys-29. The short motif at 31–41 is the 'HIGH' region element; sequence PTVYNLVHIGN. Residues Cys-209, His-234, and Glu-238 each contribute to the Zn(2+) site. The short motif at 267-271 is the 'KMSKS' region element; the sequence is KMSKS. Lys-270 contributes to the ATP binding site.

This sequence belongs to the class-I aminoacyl-tRNA synthetase family. In terms of assembly, monomer. Zn(2+) serves as cofactor.

The protein resides in the cytoplasm. It catalyses the reaction tRNA(Cys) + L-cysteine + ATP = L-cysteinyl-tRNA(Cys) + AMP + diphosphate. The chain is Cysteine--tRNA ligase from Saccharophagus degradans (strain 2-40 / ATCC 43961 / DSM 17024).